Here is a 209-residue protein sequence, read N- to C-terminus: uncharacterized protein (209 aa).

Its subcellular location is the plastid. The protein resides in the chloroplast. This is an uncharacterized protein from Porphyra purpurea (Red seaweed).